Consider the following 319-residue polypeptide: Tyrosine--tRNA ligase (319 aa).

Y35 contributes to the L-tyrosine binding site. The 'HIGH' region motif lies at P40–H48. L-tyrosine is bound by residues Y156, Q160, D163, and Q178. Residues K213 to S217 carry the 'KMSKS' region motif. S216 serves as a coordination point for ATP.

It belongs to the class-I aminoacyl-tRNA synthetase family. TyrS type 3 subfamily. In terms of assembly, homodimer.

It localises to the cytoplasm. It carries out the reaction tRNA(Tyr) + L-tyrosine + ATP = L-tyrosyl-tRNA(Tyr) + AMP + diphosphate + H(+). Functionally, catalyzes the attachment of tyrosine to tRNA(Tyr) in a two-step reaction: tyrosine is first activated by ATP to form Tyr-AMP and then transferred to the acceptor end of tRNA(Tyr). This is Tyrosine--tRNA ligase from Methanobrevibacter smithii (strain ATCC 35061 / DSM 861 / OCM 144 / PS).